The sequence spans 229 residues: Probable transmembrane reductase CYB561D1 (229 aa).

At 1 to 24 the chain is on the cytoplasmic side; the sequence is MHSMEVGLVPAPAREPRLTRWLRR. One can recognise a Cytochrome b561 domain in the interval 22-224; that stretch reads LRRGSGILAH…HQISSSYLPR (203 aa). The helical transmembrane segment at 25–45 threads the bilayer; that stretch reads GSGILAHLIALGFTIFLTVLS. The Lumenal portion of the chain corresponds to 46 to 53; it reads RPGTSLFS. Residues 54–74 form a helical membrane-spanning segment; that stretch reads WHPVFMALAFCLCMAEAILLF. Position 55 (His55) interacts with heme b. The Cytoplasmic portion of the chain corresponds to 75–91; sequence SPEHSLFFFCSRKTRIR. A helical transmembrane segment spans residues 92–112; sequence LHWAGQTMAILCAVLGLGFII. The heme b site is built by His93 and His127. At 113 to 128 the chain is on the lumenal side; the sequence is SSKIRSEMSHLVSWHS. A helical membrane pass occupies residues 129 to 149; sequence WIGALTLLATGGQALCGLCLL. Over 150–169 the chain is Cytoplasmic; that stretch reads CPRAARVSRVARLKLYHLTC. His166 is a heme b binding site. Residues 170–190 form a helical membrane-spanning segment; it reads GLVVYLMATVTVLLGMYSVWF. Topologically, residues 191 to 193 are lumenal; that stretch reads QAQ. A helical transmembrane segment spans residues 194–214; sequence IKGTAWYLCLGLPLYPALVIM. The Cytoplasmic segment spans residues 215–229; that stretch reads HQISSSYLPRKKVEI.

Heme b is required as a cofactor.

It is found in the membrane. It catalyses the reaction monodehydro-L-ascorbate radical(out) + L-ascorbate(in) = monodehydro-L-ascorbate radical(in) + L-ascorbate(out). The catalysed reaction is Fe(3+)(out) + L-ascorbate(in) = monodehydro-L-ascorbate radical(in) + Fe(2+)(out) + H(+). Probable transmembrane reductase that may use ascorbate as an electron donor and transfer electrons across membranes to reduce monodehydro-L-ascorbate radical and iron cations Fe(3+) in another cellular compartment. This chain is Probable transmembrane reductase CYB561D1, found in Mus musculus (Mouse).